The primary structure comprises 93 residues: DNA-directed RNA polymerase subunit omega (93 aa).

Belongs to the RNA polymerase subunit omega family. The RNAP catalytic core consists of 2 alpha, 1 beta, 1 beta' and 1 omega subunit. When a sigma factor is associated with the core the holoenzyme is formed, which can initiate transcription.

It carries out the reaction RNA(n) + a ribonucleoside 5'-triphosphate = RNA(n+1) + diphosphate. Its function is as follows. Promotes RNA polymerase assembly. Latches the N- and C-terminal regions of the beta' subunit thereby facilitating its interaction with the beta and alpha subunits. The polypeptide is DNA-directed RNA polymerase subunit omega (Corynebacterium urealyticum (strain ATCC 43042 / DSM 7109)).